A 207-amino-acid chain; its full sequence is Myosin light chain 6B (207 aa).

A disordered region spans residues 1–50 (MPPKKDAPVKKPAGPSISKPAAKSTPGTPLAKAKAEPAAPQAPAKSQEPP). Residues 36-50 (EPAAPQAPAKSQEPP) are compositionally biased toward low complexity. EF-hand domains lie at 63–98 (DQLE…LGQN), 140–175 (GTYE…LGEK), and 175–207 (KMTE…ILSL).

Myosin is a hexamer of 2 heavy chains and 4 light chains.

Functionally, regulatory light chain of myosin. Does not bind calcium. In Mus musculus (Mouse), this protein is Myosin light chain 6B.